Consider the following 482-residue polypeptide: Uric acid transporter UacT (482 aa).

Topologically, residues 1 to 29 (MSAIDSQLPSSSGQDRPTDEVDRILSPGK) are cytoplasmic. A helical transmembrane segment spans residues 30–50 (LIILGLQHVLVMYAGAVAVPL). Over 51–62 (MIGDRLGLSKEA) the chain is Periplasmic. The helical transmembrane segment at 63 to 83 (IAMLISSDLFCCGIVTLLQCI) threads the bilayer. Residues 84–92 (GIGRFMGIR) are Cytoplasmic-facing. Residues 93–113 (LPVIMSVTFAAVTPMIAIGMN) traverse the membrane as a helical segment. At 114–115 (PD) the chain is on the periplasmic side. The chain crosses the membrane as a helical span at residues 116–136 (IGLLGIFGATIAAGFITTLLA). Topologically, residues 137-142 (PLIGRL) are cytoplasmic. A helical transmembrane segment spans residues 143-163 (MPLFPPLVTGVVITSIGLSII). At 164 to 178 (QVGIDWAAGGKGNPQ) the chain is on the periplasmic side. Residues 179-199 (YGNPVYLGISFAVLIFILLIT) traverse the membrane as a helical segment. Residues 200 to 204 (RYAKG) lie on the Cytoplasmic side of the membrane. The chain crosses the membrane as a helical span at residues 205–225 (FMSNVAVLLGIVFGFLLSWMM). At 226-261 (NEVNLSGLHDASWFAIVTPMSFGMPIFDPVSILTMT) the chain is on the periplasmic side. The chain crosses the membrane as a helical span at residues 262–282 (AVLIIVFIESMGMFLALGEIV). The Cytoplasmic portion of the chain corresponds to 283-337 (GRKLSSHDIIRGLRVDGVGTMIGGTFNSFPHTSFSQNVGLVSVTRVHSRWVCISS). Residues 338–358 (GIILILFGMVPKMAVLVASIP) form a helical membrane-spanning segment. Gln359 is a topological domain (periplasmic). Residues 360-380 (FVLGGAGLVMFGMVLATGIRI) traverse the membrane as a helical segment. At 381–392 (LSRCNYTTNRYN) the chain is on the cytoplasmic side. The chain crosses the membrane as a helical span at residues 393–413 (LYIVAISLGVGMTPTLSHDFF). Topologically, residues 414–421 (SKLPAVLQ) are periplasmic. Residues 422 to 442 (PLLHSGIMLATLSAVVLNVFF) traverse the membrane as a helical segment. Over 443–482 (NGYQHHADLVKESVSDKDLKVRTVRMWLLMRKLKKNEHGE) the chain is Cytoplasmic.

The protein belongs to the nucleobase:cation symporter-2 (NCS2) (TC 2.A.40) family.

The protein resides in the cell inner membrane. Inhibited in the presence of the protonophore carbonyl cyanide m-chlorophenyl hydrazone. Functionally, proton-dependent high-capacity transporter for uric acid. Also shows a low capacity for transport of xanthine at 37 degrees Celsius but not at 25 degrees Celsius. This is Uric acid transporter UacT (uacT) from Escherichia coli (strain K12).